Here is a 479-residue protein sequence, read N- to C-terminus: Auxin transporter-like protein 1 (479 aa).

Topologically, residues 1–58 are cytoplasmic; it reads MLSEKQGEETMMSSLNETIELNEEREEEKGASPGSGFKNFLWHGGSVYDAWFSCASNQ. Residues 59–76 form a helical membrane-spanning segment; that stretch reads VAQVLLTLPYSFSQLGMI. Over 77-78 the chain is Extracellular; that stretch reads SG. Residues 79–99 traverse the membrane as a helical segment; it reads IIFQVFYGLMGSWTAYLISIL. The Cytoplasmic segment spans residues 100–134; sequence YVEYRSRKEKENVSFKNHVIQWFEVLEGLLGPYWK. Residues 135–155 traverse the membrane as a helical segment; it reads AIGLAFNCTFLLFGSVIQLIA. Topologically, residues 156–171 are extracellular; sequence CASNIYYINDHLDKRT. A helical transmembrane segment spans residues 172–192; sequence WTYIFGACCATTVFIPSFHNY. At 193–195 the chain is on the cytoplasmic side; sequence RIW. A helical transmembrane segment spans residues 196–216; the sequence is SFLGLGMTTYTAWYMTIAAIV. The Extracellular segment spans residues 217 to 231; sequence HGQVENVVHSGPKKM. The helical transmembrane segment at 232-252 threads the bilayer; it reads VWYFTGATNILYTFGGHAVTV. Residues 253-265 lie on the Cytoplasmic side of the membrane; it reads EIMHAMWKPQKFK. The helical transmembrane segment at 266 to 286 threads the bilayer; sequence AIYFFATLYVFTLTLPSAIAV. The Extracellular portion of the chain corresponds to 287-313; it reads YWAFGDQLLDHSNAFSLLPRNAWRDAG. Residues 314–334 traverse the membrane as a helical segment; it reads VILMLIHQFITFGFACTPLYF. At 335–355 the chain is on the cytoplasmic side; that stretch reads VWEKVIGMHDTKSIFLRALAR. A helical membrane pass occupies residues 356-376; sequence LPVVIPIWFLAIIFPFFGPIN. Ser377 is a topological domain (extracellular). A helical membrane pass occupies residues 378–398; that stretch reads AVGALLVSFTVYVIPASAHML. Residues 399–421 lie on the Cytoplasmic side of the membrane; the sequence is TYRSASARQNAAEKLPKVIPSWT. The chain crosses the membrane as a helical span at residues 422–442; the sequence is LMYVINAFVVIWVTIVGFGFG. The Extracellular portion of the chain corresponds to 443–479; sequence GWASMTNFIKQVDTFGLFAKCYQCPPKLPASNHTMHH. A glycan (N-linked (GlcNAc...) asparagine) is linked at Asn474.

Belongs to the amino acid/polyamine transporter 2 family. Amino acid/auxin permease (AAAP) (TC 2.A.18.1) subfamily. In terms of tissue distribution, shoots and roots of nodulating plants. Higher levels in roots, flowers and stems, lower in nodules, leaves, petioles and shoot apices.

It localises to the cell membrane. Functionally, carrier protein involved in proton-driven auxin influx. Mediates the formation of auxin gradient from developing leaves (site of auxin biosynthesis) to tips by contributing to the loading of auxin in vascular tissues and facilitating acropetal (base to tip) auxin transport within inner tissues of the root apex, and basipetal (tip to base) auxin transport within outer tissues of the root apex. May be involved in lateral roots and nodules formation. The polypeptide is Auxin transporter-like protein 1 (LAX1) (Medicago truncatula (Barrel medic)).